The chain runs to 187 residues: MPKVSEDHLAARRRQILDGARRCFAEYGYDKATVRRLEQAIGMSRGAIFHHFRDKDALFFALAREDTERMAAVASREGLIGVMRDMLAAPDQFDWLATRLEIARKLRNDPDFSRGWAERSAELAAATTDRLRRQKQANRVRDDVPSDVLRCYLDLVLDGLLARLASGEDPQRLAAVLDLVENSVRRS.

In terms of domain architecture, HTH tetR-type spans 10 to 70; sequence AARRRQILDG…ALAREDTERM (61 aa). Residues 33–52 constitute a DNA-binding region (H-T-H motif); that stretch reads TVRRLEQAIGMSRGAIFHHF.

In terms of assembly, homodimer.

Binding to DNA is abolished in the presence of high concentration of iron. Specifically binds to tetracycline, which leads to a conformational change in the structure of the protein and inhibits the DNA binding activity. In terms of biological role, represses the expression of the aconitase gene acn and its own expression, in an iron-responsive manner. Binds to the inverted repeat element present in the upstream region of acn (Rv1475c)-Rv1474c operon. Preferentially binds to major groove of the DNA. This chain is HTH-type transcriptional repressor Rv1474c, found in Mycobacterium tuberculosis (strain ATCC 25618 / H37Rv).